Reading from the N-terminus, the 78-residue chain is Small ribosomal subunit protein uS17 (78 aa).

The protein belongs to the universal ribosomal protein uS17 family. In terms of assembly, part of the 30S ribosomal subunit.

Functionally, one of the primary rRNA binding proteins, it binds specifically to the 5'-end of 16S ribosomal RNA. The sequence is that of Small ribosomal subunit protein uS17 from Pelagibacter ubique (strain HTCC1062).